An 82-amino-acid polypeptide reads, in one-letter code: MKTLLLTLVVVTIVCLDLGYTLKCNQLIPPFYKTCAAGKNLCYKMFMVAAQRFPVKRGCIDVCPKSSLLVKYVCCNTDRCNN.

An N-terminal signal peptide occupies residues 1-21 (MKTLLLTLVVVTIVCLDLGYT). 4 disulfide bridges follow: Cys24–Cys42, Cys35–Cys59, Cys63–Cys74, and Cys75–Cys80.

The protein belongs to the three-finger toxin family. Short-chain subfamily. Type IA cytotoxin sub-subfamily. In terms of assembly, monomer in solution; Homodimer and oligomer in the presence of negatively charged lipids forming a pore with a size ranging between 20 and 30 Angstroms. Expressed by the venom gland.

The protein resides in the secreted. The protein localises to the target cell membrane. Shows cytolytic activity on many different cells by forming pore in lipid membranes. In vivo, increases heart rate or kills the animal by cardiac arrest. In addition, it binds to heparin with high affinity, interacts with Kv channel-interacting protein 1 (KCNIP1) in a calcium-independent manner, and binds to integrin alpha-V/beta-3 (ITGAV/ITGB3) with moderate affinity. This chain is Cytotoxin 6, found in Naja atra (Chinese cobra).